Consider the following 206-residue polypeptide: MFSRFATRYNALFEKAPIMTMCLTAGTLGGISDAVAQGLTIYQTNKNAMIGLDGVRLNTHPEIPSIKRVLQFVTFGFAISPFQFRWLRLLSAKFPIEKGAINVVKRVLLDQAVFAPFGTAFFFSWMTLAEGKGFRGAYDKLQAVFWPTLKANYMVWPFFQTVNFWLMPLQYQMPFACTVAIFWNIFLSLKNASSMQESGSQEIELF.

2 consecutive transmembrane segments (helical) span residues Val107–Thr127 and Leu169–Leu189.

It belongs to the peroxisomal membrane protein PXMP2/4 family.

Its subcellular location is the mitochondrion inner membrane. In Schizosaccharomyces pombe (strain 972 / ATCC 24843) (Fission yeast), this protein is Protein sym1 (sym1).